A 602-amino-acid chain; its full sequence is PEX5-related protein (602 aa).

Disordered regions lie at residues 94–140 (VSQT…PETS) and 167–206 (HLMA…LNSE). A phosphoserine mark is found at Ser181, Ser229, Ser233, and Ser237. TPR repeat units lie at residues 302–335 (WPGA…DPGN), 336–369 (AEAW…QPNN), and 371–403 (KALM…NPKY). 2 positions are modified to phosphoserine: Ser421 and Ser423. 3 TPR repeats span residues 450–483 (PDLQ…RPED), 485–517 (SLWN…QPGF), and 519–551 (RSRY…QRKS).

It belongs to the peroxisomal targeting signal receptor family. In terms of assembly, forms an obligate 4:4 complex with HCN2. Interacts with RAB8B. Interacts with HCN3. Interacts with HCN4 with a 4:4 HCN4:PEX5L stoichiometry; reduces the effects of cAMP on the voltage-dependence and rate of activation of HCN4. In terms of tissue distribution, brain specific.

The protein resides in the cytoplasm. It is found in the membrane. In terms of biological role, accessory subunit of hyperpolarization-activated cyclic nucleotide-gated (HCN) channels, regulating their cell-surface expression and cyclic nucleotide dependence. This chain is PEX5-related protein (Pex5l), found in Rattus norvegicus (Rat).